The chain runs to 472 residues: Siroheme synthase (472 aa).

Residues 1 to 203 form a precorrin-2 dehydrogenase /sirohydrochlorin ferrochelatase region; the sequence is MNYLPIFIDI…GKIQEAKADL (203 aa). NAD(+) is bound by residues 22-23 and 43-44; these read DI and KS. At serine 128 the chain carries Phosphoserine. A uroporphyrinogen-III C-methyltransferase region spans residues 216–472; it reads GEVYLVGGGP…SSKKSYLFGG (257 aa). Residue proline 225 coordinates S-adenosyl-L-methionine. Aspartate 248 (proton acceptor) is an active-site residue. Lysine 270 (proton donor) is an active-site residue. S-adenosyl-L-methionine is bound by residues 301–303, isoleucine 306, 331–332, methionine 383, and glycine 412; these read GGD and TA.

It in the N-terminal section; belongs to the precorrin-2 dehydrogenase / sirohydrochlorin ferrochelatase family. This sequence in the C-terminal section; belongs to the precorrin methyltransferase family.

It catalyses the reaction uroporphyrinogen III + 2 S-adenosyl-L-methionine = precorrin-2 + 2 S-adenosyl-L-homocysteine + H(+). The enzyme catalyses precorrin-2 + NAD(+) = sirohydrochlorin + NADH + 2 H(+). It carries out the reaction siroheme + 2 H(+) = sirohydrochlorin + Fe(2+). Its pathway is cofactor biosynthesis; adenosylcobalamin biosynthesis; precorrin-2 from uroporphyrinogen III: step 1/1. The protein operates within cofactor biosynthesis; adenosylcobalamin biosynthesis; sirohydrochlorin from precorrin-2: step 1/1. It functions in the pathway porphyrin-containing compound metabolism; siroheme biosynthesis; precorrin-2 from uroporphyrinogen III: step 1/1. It participates in porphyrin-containing compound metabolism; siroheme biosynthesis; siroheme from sirohydrochlorin: step 1/1. Its pathway is porphyrin-containing compound metabolism; siroheme biosynthesis; sirohydrochlorin from precorrin-2: step 1/1. Its function is as follows. Multifunctional enzyme that catalyzes the SAM-dependent methylations of uroporphyrinogen III at position C-2 and C-7 to form precorrin-2 via precorrin-1. Then it catalyzes the NAD-dependent ring dehydrogenation of precorrin-2 to yield sirohydrochlorin. Finally, it catalyzes the ferrochelation of sirohydrochlorin to yield siroheme. In Ruthia magnifica subsp. Calyptogena magnifica, this protein is Siroheme synthase.